A 361-amino-acid polypeptide reads, in one-letter code: S-adenosylmethionine decarboxylase proenzyme (361 aa).

Catalysis depends on residues Glu-13 and Glu-16. Ser-73 functions as the Schiff-base intermediate with substrate; via pyruvic acid in the catalytic mechanism. Residue Ser-73 is modified to Pyruvic acid (Ser); by autocatalysis. Cys-87 (proton donor; for catalytic activity) is an active-site residue. Catalysis depends on proton acceptor; for processing activity residues Ser-236 and His-249.

This sequence belongs to the eukaryotic AdoMetDC family. Pyruvate is required as a cofactor. In terms of processing, is synthesized initially as an inactive proenzyme. Formation of the active enzyme involves a self-maturation process in which the active site pyruvoyl group is generated from an internal serine residue via an autocatalytic post-translational modification. Two non-identical subunits are generated from the proenzyme in this reaction, and the pyruvate is formed at the N-terminus of the alpha chain, which is derived from the carboxyl end of the proenzyme. The post-translation cleavage follows an unusual pathway, termed non-hydrolytic serinolysis, in which the side chain hydroxyl group of the serine supplies its oxygen atom to form the C-terminus of the beta chain, while the remainder of the serine residue undergoes an oxidative deamination to produce ammonia and the pyruvoyl group blocking the N-terminus of the alpha chain.

It catalyses the reaction S-adenosyl-L-methionine + H(+) = S-adenosyl 3-(methylsulfanyl)propylamine + CO2. It participates in amine and polyamine biosynthesis; S-adenosylmethioninamine biosynthesis; S-adenosylmethioninamine from S-adenosyl-L-methionine: step 1/1. This is S-adenosylmethionine decarboxylase proenzyme (SAMDC) from Nicotiana tabacum (Common tobacco).